A 503-amino-acid polypeptide reads, in one-letter code: Nondiscriminating glutamyl-tRNA synthetase EARS2, mitochondrial (503 aa).

Residues 1 to 22 (MKILRGVSRQMCTSRPEVRVRF) constitute a mitochondrion transit peptide. 21-23 (RFA) contacts L-glutamate. Residues 26–34 (PTGFLHLGG) carry the 'HIGH' region motif. Position 31 (H31) interacts with ATP. L-glutamate-binding positions include E57, 209–213 (YHLAS), and R227. ATP-binding positions include E230 and 265-269 (KLSKR). Positions 265 to 269 (KLSKR) match the 'KMSKS' region motif.

This sequence belongs to the class-I aminoacyl-tRNA synthetase family. Glutamate--tRNA ligase type 1 subfamily.

The protein resides in the mitochondrion matrix. The enzyme catalyses tRNA(Glx) + L-glutamate + ATP = L-glutamyl-tRNA(Glx) + AMP + diphosphate. It carries out the reaction tRNA(Glu) + L-glutamate + ATP = L-glutamyl-tRNA(Glu) + AMP + diphosphate. It catalyses the reaction tRNA(Gln) + L-glutamate + ATP = L-glutamyl-tRNA(Gln) + AMP + diphosphate. Functionally, non-discriminating glutamyl-tRNA synthetase that catalyzes aminoacylation of both mitochondrial tRNA(Glu) and tRNA(Gln) and participates in RNA aminoacylation for mitochondrial protein translation. Attachs glutamate to tRNA(Glu) or tRNA(Gln) in a two-step reaction: glutamate is first activated by ATP to form Glu-AMP and then transferred to the acceptor end of tRNA(Glu) or tRNA(Gln). In Danio rerio (Zebrafish), this protein is Nondiscriminating glutamyl-tRNA synthetase EARS2, mitochondrial.